We begin with the raw amino-acid sequence, 391 residues long: Oxygen-dependent coproporphyrinogen-III oxidase, chloroplastic (391 aa).

Residues 1-13 (MASSLLTTPSQTL) show a composition bias toward polar residues. Residues 1–34 (MASSLLTTPSQTLAPNPAAARARRSSPAAAQVSF) form a disordered region. Low complexity predominate over residues 14 to 30 (APNPAAARARRSSPAAA). The important for dimerization stretch occupies residues 125–134 (VLQDGNVFEK). Ser179 serves as a coordination point for substrate. His193 serves as the catalytic Proton donor. Substrate-binding positions include 195 to 197 (NYR) and 349 to 354 (GGRIES). The important for dimerization stretch occupies residues 331–366 (YVEFNLVYDRGTTFGLKTGGRIESILVSLPLTARWE).

The protein belongs to the aerobic coproporphyrinogen-III oxidase family. In terms of assembly, homodimer.

Its subcellular location is the plastid. It localises to the chloroplast. It carries out the reaction coproporphyrinogen III + O2 + 2 H(+) = protoporphyrinogen IX + 2 CO2 + 2 H2O. Its pathway is porphyrin-containing compound metabolism; protoporphyrin-IX biosynthesis; protoporphyrinogen-IX from coproporphyrinogen-III (O2 route): step 1/1. In terms of biological role, involved in the heme and chlorophyll biosynthesis. Catalyzes the aerobic oxidative decarboxylation of propionate groups of rings A and B of coproporphyrinogen-III to yield the vinyl groups in protoporphyrinogen-IX. This chain is Oxygen-dependent coproporphyrinogen-III oxidase, chloroplastic (CPX), found in Hordeum vulgare (Barley).